A 134-amino-acid chain; its full sequence is Methylglyoxal synthase (134 aa).

The MGS-like domain occupies 1–134; the sequence is MKIALIAHDR…DWRLIQERRN (134 aa). Substrate is bound by residues His-8, Lys-12, 34–37, and 54–55; these read TGTT and SG. The Proton donor/acceptor role is filled by Asp-60. His-87 contacts substrate.

Belongs to the methylglyoxal synthase family.

The catalysed reaction is dihydroxyacetone phosphate = methylglyoxal + phosphate. Functionally, catalyzes the formation of methylglyoxal from dihydroxyacetone phosphate. The protein is Methylglyoxal synthase of Lysinibacillus sphaericus (strain C3-41).